The chain runs to 299 residues: Ribonuclease H2 subunit A (299 aa).

Met-1 is subject to N-acetylmethionine. Residues 28–250 (PCVLGVDEAG…AQTILEKEAE (223 aa)) enclose the RNase H type-2 domain. 3 residues coordinate a divalent metal cation: Asp-34, Glu-35, and Asp-141. A phosphothreonine mark is found at Thr-204 and Thr-216. Phosphoserine occurs at positions 257 and 277.

Belongs to the RNase HII family. Eukaryotic subfamily. In terms of assembly, the RNase H2 complex is a heterotrimer composed of the catalytic subunit RNASEH2A and the non-catalytic subunits RNASEH2B and RNASEH2C. Requires Mn(2+) as cofactor. The cofactor is Mg(2+).

Its subcellular location is the nucleus. It catalyses the reaction Endonucleolytic cleavage to 5'-phosphomonoester.. In terms of biological role, catalytic subunit of RNase HII, an endonuclease that specifically degrades the RNA of RNA:DNA hybrids. Participates in DNA replication, possibly by mediating the removal of lagging-strand Okazaki fragment RNA primers during DNA replication. Mediates the excision of single ribonucleotides from DNA:RNA duplexes. The protein is Ribonuclease H2 subunit A (RNASEH2A) of Homo sapiens (Human).